The chain runs to 446 residues: Transcriptional regulator STERILE APETALA (446 aa).

The segment covering 1 to 10 has biased composition (low complexity); that stretch reads MSTSSSSSDN. Positions 1-32 are disordered; sequence MSTSSSSSDNGAGGSGGVFEAPSPSRPRRGAN.

Expressed in inflorescence and floral meristems, young floral organ primordia, and later in ovule primordia.

Its subcellular location is the nucleus. In terms of biological role, transcriptional regulator involved in the specification of floral identity. Acts as A class cadastral protein by repressing the C class floral homeotic gene AGAMOUS in the external flower organs in association with APETALA2 and other repressors. Is required to maintain floral meristem identity in concert with AGAMOUS. Also interacts with APETALA2 to ensure the normal development of ovule. The protein is Transcriptional regulator STERILE APETALA (SAP) of Arabidopsis thaliana (Mouse-ear cress).